A 206-amino-acid chain; its full sequence is LysM and putative peptidoglycan-binding domain-containing protein 2 (206 aa).

The LysM domain occupies 59-103 (IEHCLSPSDTLQGIALKYGVTMEQIKRANKLFSTDCIFLRKSLNI). Residues 184-206 (AQRLKEEDDLRHDGSYATCSYQH) are disordered. Over residues 186–197 (RLKEEDDLRHDG) the composition is skewed to basic and acidic residues.

The polypeptide is LysM and putative peptidoglycan-binding domain-containing protein 2 (lysmd2) (Xenopus laevis (African clawed frog)).